Reading from the N-terminus, the 503-residue chain is Arabinose import ATP-binding protein AraG 1 (503 aa).

2 consecutive ABC transporter domains span residues 5-240 (LRFD…MVGR) and 251-497 (RTLG…LPQT). 37–44 (GENGAGKS) contributes to the ATP binding site.

This sequence belongs to the ABC transporter superfamily. Arabinose importer (TC 3.A.1.2.2) family. As to quaternary structure, the complex is composed of two ATP-binding proteins (AraG), two transmembrane proteins (AraH) and a solute-binding protein (AraF).

It is found in the cell inner membrane. It catalyses the reaction L-arabinose(out) + ATP + H2O = L-arabinose(in) + ADP + phosphate + H(+). Its function is as follows. Part of the ABC transporter complex AraFGH involved in arabinose import. Responsible for energy coupling to the transport system. The protein is Arabinose import ATP-binding protein AraG 1 of Burkholderia cenocepacia (strain HI2424).